Reading from the N-terminus, the 1037-residue chain is Probable serine/threonine-protein kinase KCC4 (1037 aa).

One can recognise a Protein kinase domain in the interval W21–L285. ATP contacts are provided by residues L27 to V35 and K50. Catalysis depends on D152, which acts as the Proton acceptor. The span at N372 to R387 shows a compositional bias: basic residues. Residues N372–T494 are disordered. The segment covering S388–I404 has biased composition (low complexity). Phosphoserine is present on S396. The span at P408 to S427 shows a compositional bias: basic residues. The segment covering N453–G465 has biased composition (polar residues). Residues P469 to K480 show a composition bias toward basic residues. Low complexity predominate over residues R481 to T494. 6 positions are modified to phosphoserine: S675, S707, S777, S822, S825, and S871. Disordered stretches follow at residues L746–Q804, Q810–E829, and T861–K918. Polar residues predominate over residues T861–G873. Over residues G879–K888 the composition is skewed to basic and acidic residues.

Belongs to the protein kinase superfamily. CAMK Ser/Thr protein kinase family. NIM1 subfamily. In terms of assembly, interacts with septin proteins, primarily with CDC11. Interacts with SWE1 and NAP1.

It localises to the bud neck. The enzyme catalyses L-seryl-[protein] + ATP = O-phospho-L-seryl-[protein] + ADP + H(+). It carries out the reaction L-threonyl-[protein] + ATP = O-phospho-L-threonyl-[protein] + ADP + H(+). Functionally, involved in regulation of bud growth during cell cycle and in septin organization. Plays a role in cell wall synthesis. The chain is Probable serine/threonine-protein kinase KCC4 (KCC4) from Saccharomyces cerevisiae (strain ATCC 204508 / S288c) (Baker's yeast).